Consider the following 368-residue polypeptide: Probable magnesium transporter NIPA3 (368 aa).

The Extracellular portion of the chain corresponds to Met1–Asp18. The chain crosses the membrane as a helical span at residues Asn19–Val39. Topologically, residues Lys40–Leu66 are cytoplasmic. Residues Trp67–Phe87 form a helical membrane-spanning segment. The Extracellular portion of the chain corresponds to Ala88–Ala90. The chain crosses the membrane as a helical span at residues Ile91–Ile111. Topologically, residues Leu112–Lys115 are cytoplasmic. Residues Leu116 to Leu136 traverse the membrane as a helical segment. The Extracellular segment spans residues His137–Pro157. The helical transmembrane segment at Ala158 to Val178 threads the bilayer. Residues Pro179 to Tyr189 lie on the Cytoplasmic side of the membrane. A helical transmembrane segment spans residues Ile190–Ala210. Residues Leu211 to Gln220 lie on the Extracellular side of the membrane. A helical membrane pass occupies residues Leu221–Met241. The Cytoplasmic portion of the chain corresponds to Asn242–Val255. A helical membrane pass occupies residues Val256–Phe276. At Lys277 to Asp283 the chain is on the extracellular side. A helical membrane pass occupies residues Gly284–Leu304. Over His305–Val368 the chain is Cytoplasmic.

Belongs to the NIPA (TC 2.A.7) family. As to quaternary structure, homodimer.

Its subcellular location is the cell membrane. The protein resides in the early endosome. In terms of biological role, acts as a Mg(2+) transporter. Can also transport other divalent cations such as Fe(2+), Sr(2+), Ba(2+), Mn(2+) and Co(2+) but to a much less extent than Mg(2+). In Arabidopsis thaliana (Mouse-ear cress), this protein is Probable magnesium transporter NIPA3.